Here is a 115-residue protein sequence, read N- to C-terminus: U17-barytoxin-Tl1b (115 aa).

Residues 1–20 (MKTIIVFLSLLVLATKFGDA) form the signal peptide. A propeptide spanning residues 21 to 74 (KEGVNQKQKKEVTQNEFREEYLNEMAAMSLVQQLEAIERALFENEAGRNSRQKR) is cleaved from the precursor. Cystine bridges form between C75–C89, C82–C94, and C88–C109.

The protein belongs to the neurotoxin 14 (magi-1) family. 03 (ICK-30-40) subfamily. Expressed by the venom gland.

It localises to the secreted. Ion channel inhibitor. This chain is U17-barytoxin-Tl1b, found in Trittame loki (Brush-footed trapdoor spider).